The sequence spans 152 residues: MSEKYIVTWDMLQIHARKLASRLMPSEQWKGIIAVSRGGLVPGALLARELGIRHVDTVCISSYDHDNQRELKVLKRAEGDGEGFIVIDDLVDTGGTAVAIREMYPKAHFVTIFAKPAGRPLVDDYVVDIPQNTWIEQPWDMGVVFVPPISGR.

5-phospho-alpha-D-ribose 1-diphosphate is bound by residues 37-38 (RG), arginine 69, and 88-96 (DDLVDTGGT). Arginine 69 contacts GMP. Aspartate 89 contacts Mg(2+). Residues aspartate 92 and isoleucine 135 each coordinate guanine. Positions 92 and 135 each coordinate xanthine. GMP contacts are provided by residues 92 to 96 (DTGGT) and 134 to 135 (WI).

This sequence belongs to the purine/pyrimidine phosphoribosyltransferase family. XGPT subfamily. In terms of assembly, homotetramer. Requires Mg(2+) as cofactor.

It localises to the cell inner membrane. It catalyses the reaction GMP + diphosphate = guanine + 5-phospho-alpha-D-ribose 1-diphosphate. The enzyme catalyses XMP + diphosphate = xanthine + 5-phospho-alpha-D-ribose 1-diphosphate. The catalysed reaction is IMP + diphosphate = hypoxanthine + 5-phospho-alpha-D-ribose 1-diphosphate. The protein operates within purine metabolism; GMP biosynthesis via salvage pathway; GMP from guanine: step 1/1. It functions in the pathway purine metabolism; XMP biosynthesis via salvage pathway; XMP from xanthine: step 1/1. Functionally, purine salvage pathway enzyme that catalyzes the transfer of the ribosyl-5-phosphate group from 5-phospho-alpha-D-ribose 1-diphosphate (PRPP) to the N9 position of the 6-oxopurines guanine and xanthine to form the corresponding ribonucleotides GMP (guanosine 5'-monophosphate) and XMP (xanthosine 5'-monophosphate), with the release of PPi. To a lesser extent, also acts on hypoxanthine. The sequence is that of Xanthine-guanine phosphoribosyltransferase from Escherichia coli O127:H6 (strain E2348/69 / EPEC).